Consider the following 349-residue polypeptide: Ion-translocating oxidoreductase complex subunit D (349 aa).

Transmembrane regions (helical) follow at residues 36-56 (CAFF…VALS), 77-99 (SAML…WMIV), and 124-144 (AMAA…SWIA). T185 is modified (FMN phosphoryl threonine). The next 5 helical transmembrane spans lie at 212-232 (GTGV…LVLL), 239-259 (WHIS…GFLL), 265-285 (ASPL…FIAT), 291-311 (ATSP…VYII), and 315-335 (GGYP…APFI).

Belongs to the NqrB/RnfD family. As to quaternary structure, the complex is composed of six subunits: RnfA, RnfB, RnfC, RnfD, RnfE and RnfG. The cofactor is FMN.

It is found in the cell inner membrane. In terms of biological role, part of a membrane-bound complex that couples electron transfer with translocation of ions across the membrane. The protein is Ion-translocating oxidoreductase complex subunit D of Shewanella sp. (strain ANA-3).